A 533-amino-acid polypeptide reads, in one-letter code: AAA-ATPase At5g17740 (533 aa).

The helical transmembrane segment at 11–27 (ASMFSTYASMMGYVMII) threads the bilayer. 252–259 (GPPGTGKS) is an ATP binding site.

Belongs to the AAA ATPase family. BCS1 subfamily. Mg(2+) is required as a cofactor.

It localises to the membrane. It carries out the reaction ATP + H2O = ADP + phosphate + H(+). The protein is AAA-ATPase At5g17740 of Arabidopsis thaliana (Mouse-ear cress).